The sequence spans 100 residues: Mitochondrial import inner membrane translocase subunit Tim10 B (100 aa).

A Twin CX3C motif motif is present at residues 25-49 (CFQRCVPSLHHRALDAEEEACLHSC). 2 disulfides stabilise this stretch: C25/C49 and C29/C45.

This sequence belongs to the small Tim family. Component of the TIM22 complex, which core is composed of TIMM22, associated with TIMM10 (TIMM10A and/or TIMM10B), TIMM9, AGK and TIMM29.

It localises to the mitochondrion inner membrane. Its function is as follows. Component of the TIM22 complex, a complex that mediates the import and insertion of multi-pass transmembrane proteins into the mitochondrial inner membrane. The TIM22 complex forms a twin-pore translocase that uses the membrane potential as the external driving force. In the TIM22 complex, it may act as a docking point for the soluble 70 kDa complex that guides the target proteins in transit through the aqueous mitochondrial intermembrane space. This chain is Mitochondrial import inner membrane translocase subunit Tim10 B (Timm10b), found in Rattus norvegicus (Rat).